A 445-amino-acid polypeptide reads, in one-letter code: Xylose isomerase (445 aa).

Residues His107 and Asp110 contribute to the active site. Residues Glu238, Glu274, His277, Asp302, Asp313, Asp315, and Asp345 each contribute to the Mg(2+) site.

This sequence belongs to the xylose isomerase family. Homotetramer. It depends on Mg(2+) as a cofactor.

It localises to the cytoplasm. It carries out the reaction alpha-D-xylose = alpha-D-xylulofuranose. This chain is Xylose isomerase, found in Bacillus pumilus (strain SAFR-032).